The sequence spans 861 residues: Bifunctional uridylyltransferase/uridylyl-removing enzyme (861 aa).

The interval 1 to 321 (MKNDNRIIKN…VYHQKQKIIR (321 aa)) is uridylyltransferase. The tract at residues 322 to 678 (LDDEFQLSNR…IMPHHSQGGT (357 aa)) is uridylyl-removing. Residues 440–562 (VDQHTLFVIR…LPHARYLDYL (123 aa)) form the HD domain. ACT domains follow at residues 679 to 760 (EVFI…AVSR) and 788 to 861 (QLFL…KSKY).

The protein belongs to the GlnD family. The cofactor is Mg(2+).

The enzyme catalyses [protein-PII]-L-tyrosine + UTP = [protein-PII]-uridylyl-L-tyrosine + diphosphate. The catalysed reaction is [protein-PII]-uridylyl-L-tyrosine + H2O = [protein-PII]-L-tyrosine + UMP + H(+). Uridylyltransferase (UTase) activity is inhibited by glutamine, while glutamine activates uridylyl-removing (UR) activity. Functionally, modifies, by uridylylation and deuridylylation, the PII regulatory proteins (GlnB and homologs), in response to the nitrogen status of the cell that GlnD senses through the glutamine level. Under low glutamine levels, catalyzes the conversion of the PII proteins and UTP to PII-UMP and PPi, while under higher glutamine levels, GlnD hydrolyzes PII-UMP to PII and UMP (deuridylylation). Thus, controls uridylylation state and activity of the PII proteins, and plays an important role in the regulation of nitrogen assimilation and metabolism. This Legionella pneumophila (strain Paris) protein is Bifunctional uridylyltransferase/uridylyl-removing enzyme.